We begin with the raw amino-acid sequence, 227 residues long: Thymidylate kinase (227 aa).

Residue 16-23 participates in ATP binding; it reads GIDGAGKT.

It belongs to the thymidylate kinase family.

It catalyses the reaction dTMP + ATP = dTDP + ADP. Its function is as follows. Phosphorylation of dTMP to form dTDP in both de novo and salvage pathways of dTTP synthesis. The protein is Thymidylate kinase of Xanthomonas oryzae pv. oryzae (strain MAFF 311018).